The primary structure comprises 238 residues: Aspartate/glutamate leucyltransferase (238 aa).

The protein belongs to the R-transferase family. Bpt subfamily.

Its subcellular location is the cytoplasm. It carries out the reaction N-terminal L-glutamyl-[protein] + L-leucyl-tRNA(Leu) = N-terminal L-leucyl-L-glutamyl-[protein] + tRNA(Leu) + H(+). It catalyses the reaction N-terminal L-aspartyl-[protein] + L-leucyl-tRNA(Leu) = N-terminal L-leucyl-L-aspartyl-[protein] + tRNA(Leu) + H(+). In terms of biological role, functions in the N-end rule pathway of protein degradation where it conjugates Leu from its aminoacyl-tRNA to the N-termini of proteins containing an N-terminal aspartate or glutamate. The chain is Aspartate/glutamate leucyltransferase from Shewanella sp. (strain ANA-3).